The primary structure comprises 351 residues: MSKQPSLSYKDAGVDIDAGEALVERIKGVARRTARPEVMGGLGGFGALCEIPAGYRQPVLVSGTDGVGTKLRLAMNLGKHDSIGIDLVAMCVNDLVVCGAEPLFFLDYYATGKLNVDVAARVVAGIGEGCEMAGCALVGGETAEMPGMYEGEDYDLAGFCVGVVEKSEIIDGAKVAAGDALIALPSSGPHSNGYSLIRKILELSGTDVAGATLDGKPLADLLMAPTRIYVKPLLKLIRETGAVKAMAHITGGGLTENIPRVLPQGTRAVIDVASWTRPAVFDWLQEKGNVDEREMHRVLNCGVGMVVCVARDKVEQALAVLRAAGEQPWLIGDIAAGDGAERVQLHNLKAH.

This sequence belongs to the AIR synthase family.

It is found in the cytoplasm. It catalyses the reaction 2-formamido-N(1)-(5-O-phospho-beta-D-ribosyl)acetamidine + ATP = 5-amino-1-(5-phospho-beta-D-ribosyl)imidazole + ADP + phosphate + H(+). It functions in the pathway purine metabolism; IMP biosynthesis via de novo pathway; 5-amino-1-(5-phospho-D-ribosyl)imidazole from N(2)-formyl-N(1)-(5-phospho-D-ribosyl)glycinamide: step 2/2. This is Phosphoribosylformylglycinamidine cyclo-ligase from Azotobacter vinelandii (strain DJ / ATCC BAA-1303).